The sequence spans 157 residues: Phosphopantetheine adenylyltransferase (157 aa).

Residue threonine 8 participates in substrate binding. Residues 8–9 (TF) and histidine 16 contribute to the ATP site. Substrate is bound by residues lysine 40, threonine 72, and arginine 86. ATP-binding positions include 87–89 (GLR), glutamate 97, and 122–128 (YSFLSSS).

The protein belongs to the bacterial CoaD family. Homohexamer. Mg(2+) serves as cofactor.

The protein localises to the cytoplasm. It carries out the reaction (R)-4'-phosphopantetheine + ATP + H(+) = 3'-dephospho-CoA + diphosphate. Its pathway is cofactor biosynthesis; coenzyme A biosynthesis; CoA from (R)-pantothenate: step 4/5. In terms of biological role, reversibly transfers an adenylyl group from ATP to 4'-phosphopantetheine, yielding dephospho-CoA (dPCoA) and pyrophosphate. This is Phosphopantetheine adenylyltransferase from Prochlorococcus marinus (strain MIT 9215).